Consider the following 152-residue polypeptide: CMT1A duplicated region transcript 4 protein (152 aa).

Over residues methionine 1–glycine 11 the composition is skewed to basic and acidic residues. Disordered regions lie at residues methionine 1 to leucine 23 and glutamate 60 to valine 89. Residues serine 65–isoleucine 74 show a composition bias toward polar residues.

Expressed in fetal skeletal muscle and kidney.

This Homo sapiens (Human) protein is CMT1A duplicated region transcript 4 protein (CDRT4).